Here is a 1027-residue protein sequence, read N- to C-terminus: Contactin-5 (1027 aa).

Residues 1 to 19 form the signal peptide; sequence MMWLSWKLFLFLSLIGCLS. Ig-like C2-type domains follow at residues 32–117, 123–209, 227–307, 317–401, 407–494, and 498–593; these read PDDV…AVLQ, NFSG…RVLS, PKIE…RNVF, PQWV…AELK, PTFP…ASVS, and PTRI…TELL. The cysteines at positions 50 and 100 are disulfide-linked. N-linked (GlcNAc...) asparagine glycans are attached at residues asparagine 65 and asparagine 123. Cystine bridges form between cysteine 144–cysteine 196 and cysteine 249–cysteine 296. Residues asparagine 324, asparagine 376, and asparagine 467 are each glycosylated (N-linked (GlcNAc...) asparagine). 3 disulfide bridges follow: cysteine 338-cysteine 385, cysteine 430-cysteine 478, and cysteine 520-cysteine 577. Fibronectin type-III domains are found at residues 600–698, 703–800, 805–899, and 901–994; these read PPGV…TNEA, PPAN…SAEG, APID…TKKS, and PSQA…SYAG. Residues asparagine 706, asparagine 743, asparagine 858, and asparagine 929 are each glycosylated (N-linked (GlcNAc...) asparagine). Serine 999 carries the GPI-anchor amidated serine lipid modification. Residues 1000 to 1027 constitute a propeptide, removed in mature form; it reads AQSTLHMFSTSSSSVTLLLVLMVPSTSW.

This sequence belongs to the immunoglobulin superfamily. Contactin family. As to quaternary structure, interacts with INgCAM/L1 and the tenascin-R TNP protein. Does not interacts with NrCAM. In terms of tissue distribution, expressed by subpopulations of Purkinje cells in the cerebellum. Also expressed by one type of Purkinje cell afferents, the climbing fibers.

It is found in the cell membrane. In terms of biological role, contactins mediate cell surface interactions during nervous system development. May contribute to the formation of somatotopic maps of cerebellar afferents during the development of the nervous system. This Gallus gallus (Chicken) protein is Contactin-5 (CNTN5).